Reading from the N-terminus, the 454-residue chain is Glutamine synthetase (454 aa).

The GS beta-grasp domain maps to 19-111 (NNVKFIRFQF…VICDVYKDEK (93 aa)). Residues 118–454 (PRSRLKAILE…DWETGKYLIY (337 aa)) form the GS catalytic domain. Mg(2+) contacts are provided by glutamate 142 and glutamate 144. Residue glutamate 194 participates in ATP binding. Residues glutamate 199 and glutamate 206 each contribute to the Mg(2+) site. L-glutamate-binding positions include 250–251 (NG) and glycine 251. Mg(2+) is bound at residue histidine 255. Residues 257-259 (HQS) and serine 259 contribute to the ATP site. Residues arginine 309, glutamate 315, and arginine 327 each contribute to the L-glutamate site. Residues arginine 327, arginine 332, and lysine 339 each coordinate ATP. Glutamate 344 is a binding site for Mg(2+). Arginine 346 serves as a coordination point for L-glutamate.

This sequence belongs to the glutamine synthetase family. Oligomer of 12 subunits arranged in the form of two hexagons. Requires Mg(2+) as cofactor.

It localises to the cytoplasm. It carries out the reaction L-glutamate + NH4(+) + ATP = L-glutamine + ADP + phosphate + H(+). Its activity is regulated as follows. Feedback inhibited by glycine and alanine, and inhibited by low concentrations of methionine sulfoximine. In terms of biological role, probably involved in nitrogen metabolism via ammonium assimilation. Catalyzes the ATP-dependent biosynthesis of glutamine from glutamate and ammonia. Beta-glutamate is a much poorer substrate than alpha-glutamate. The polypeptide is Glutamine synthetase (Methanocaldococcus jannaschii (strain ATCC 43067 / DSM 2661 / JAL-1 / JCM 10045 / NBRC 100440) (Methanococcus jannaschii)).